Here is a 560-residue protein sequence, read N- to C-terminus: Endogenous retrovirus group K member 18 Env polyprotein (560 aa).

The segment at phenylalanine 355–valine 375 is fusion peptide. The helical transmembrane segment at isoleucine 522–leucine 542 threads the bilayer.

This sequence belongs to the beta type-B retroviral envelope protein family. HERV class-II K(HML-2) env subfamily. The surface (SU) and transmembrane (TM) proteins form a heterodimer. SU and TM are attached by noncovalent interactions or by a labile interchain disulfide bond. Post-translationally, specific enzymatic cleavages in vivo yield the mature SU and TM proteins. In terms of tissue distribution, expressed at higher level in the thymus. Expressed at lower level in peripheral blood lymphocytes.

Its subcellular location is the cell membrane. The protein resides in the virion. Retroviral envelope proteins mediate receptor recognition and membrane fusion during early infection. Endogenous envelope proteins may have kept, lost or modified their original function during evolution. This envelope protein has superantigenic properties. In terms of biological role, SU mediates receptor recognition. Its function is as follows. TM anchors the envelope heterodimer to the viral membrane through one transmembrane domain. The other hydrophobic domain, called fusion peptide, mediates fusion of the viral membrane with the target cell membrane. The chain is Endogenous retrovirus group K member 18 Env polyprotein (ERVK-18) from Homo sapiens (Human).